We begin with the raw amino-acid sequence, 508 residues long: MKFVLLLSLIGFCWAQYDPHTSDGRTAIVHLFEWRWVDIAKECERYLAPKGFGGVQVSPPNENVVVHNPSRPWWERYQPISYKICTRSGNEDEFRDMVTRCNNVGVRIYVDAVINHMCGAGNPAGTSSTCGSYLNPNNREFPAVPYSAWDFNDNKCNGEIDNYNDAYQVRNCRLTGLLDLALEKDYVRTKVADYMNHLIDIGVAGFRLDAAKHMWPGDIKAVLDKLHNLNTKWFSQGSRPFIFQEVIDLGGEAIKGSEYFGNGRVTEFKYGAKLGTVIRKWNGEKMSYLKNWGEGWGLVPSDRALVFVDNHDNQRGHGAGGSSILTFWDARMYKMAVGFMLAHPYGFTRVMSSYRWNRNFQNGKDQNDWIGPPNNNGVTKEVTINADTTCGNDWVCEHRWRQIRNMVAFRNVVNGQPFSNWWDNNSNQVAFSRGNRGFIVFNNDDWALSATLQTGLPAGTYCDVISGDKVDGNCTGLRVNVGSDGKAHFSISNSAEDPFIAIHADSKL.

An N-terminal signal peptide occupies residues 1–15 (MKFVLLLSLIGFCWA). Glutamine 16 bears the Pyrrolidone carboxylic acid mark. 3 disulfide bridges follow: cysteine 43–cysteine 101, cysteine 85–cysteine 130, and cysteine 156–cysteine 172. Ca(2+)-binding residues include asparagine 115, arginine 170, and aspartate 179. Arginine 207 is a binding site for chloride. Aspartate 209 acts as the Nucleophile in catalysis. Histidine 213 provides a ligand contact to Ca(2+). The Proton donor role is filled by glutamate 245. Chloride is bound by residues asparagine 310 and arginine 349. 2 cysteine pairs are disulfide-bonded: cysteine 390-cysteine 396 and cysteine 462-cysteine 474.

This sequence belongs to the glycosyl hydrolase 13 family. In terms of assembly, monomer. Ca(2+) is required as a cofactor. It depends on chloride as a cofactor.

The protein resides in the secreted. It localises to the extracellular space. It catalyses the reaction Endohydrolysis of (1-&gt;4)-alpha-D-glucosidic linkages in polysaccharides containing three or more (1-&gt;4)-alpha-linked D-glucose units.. The polypeptide is Pancreatic alpha-amylase 2a5 (Mus musculus (Mouse)).